Consider the following 152-residue polypeptide: Histone H2B.1 (152 aa).

Residues 1-28 are compositionally biased toward basic and acidic residues; sequence MAPKAEKKPAAKKPAEEEPAAEKAEKTP. Positions 1–60 are disordered; it reads MAPKAEKKPAAKKPAEEEPAAEKAEKTPAGKKPKAEKRLPAGKSAAKEGGDKKGKKKAKK. N6-acetyllysine occurs at positions 7 and 37. A Glycyl lysine isopeptide (Lys-Gly) (interchain with G-Cter in ubiquitin) cross-link involves residue K148.

It belongs to the histone H2B family. In terms of assembly, the nucleosome is a histone octamer containing two molecules each of H2A, H2B, H3 and H4 assembled in one H3-H4 heterotetramer and two H2A-H2B heterodimers. The octamer wraps approximately 147 bp of DNA. In terms of processing, can be acetylated to form H2BK6ac and H2BK33ac. Post-translationally, monoubiquitinated to form H2BK143ub1; may give a specific tag for epigenetic transcriptional activation.

Its subcellular location is the nucleus. The protein resides in the chromosome. Functionally, core component of nucleosome. Nucleosomes wrap and compact DNA into chromatin, limiting DNA accessibility to the cellular machineries which require DNA as a template. Histones thereby play a central role in transcription regulation, DNA repair, DNA replication and chromosomal stability. DNA accessibility is regulated via a complex set of post-translational modifications of histones, also called histone code, and nucleosome remodeling. This Triticum aestivum (Wheat) protein is Histone H2B.1.